Here is a 177-residue protein sequence, read N- to C-terminus: NADH-quinone oxidoreductase subunit B (177 aa).

Residues C56, C57, C121, and C151 each contribute to the [4Fe-4S] cluster site.

Belongs to the complex I 20 kDa subunit family. As to quaternary structure, NDH-1 is composed of 14 different subunits. Subunits NuoB, C, D, E, F, and G constitute the peripheral sector of the complex. [4Fe-4S] cluster is required as a cofactor.

It is found in the cell inner membrane. The enzyme catalyses a quinone + NADH + 5 H(+)(in) = a quinol + NAD(+) + 4 H(+)(out). In terms of biological role, NDH-1 shuttles electrons from NADH, via FMN and iron-sulfur (Fe-S) centers, to quinones in the respiratory chain. The immediate electron acceptor for the enzyme in this species is believed to be ubiquinone. Couples the redox reaction to proton translocation (for every two electrons transferred, four hydrogen ions are translocated across the cytoplasmic membrane), and thus conserves the redox energy in a proton gradient. The polypeptide is NADH-quinone oxidoreductase subunit B (Rhodobacter capsulatus (Rhodopseudomonas capsulata)).